The primary structure comprises 334 residues: Holliday junction branch migration complex subunit RuvB (334 aa).

The interval 1–182 is large ATPase domain (RuvB-L); that stretch reads MNERMVDQSM…FGVHLRLEYY (182 aa). Residues leucine 21, arginine 22, glycine 63, lysine 66, threonine 67, threonine 68, 129–131, arginine 172, tyrosine 182, and arginine 219 each bind ATP; that span reads EDF. Position 67 (threonine 67) interacts with Mg(2+). The small ATPAse domain (RuvB-S) stretch occupies residues 183–253; the sequence is NESDLKEIII…TTKHALGLLQ (71 aa). The interval 256–334 is head domain (RuvB-H); the sequence is QHGLDYIDHK…HFAKSNEERE (79 aa). DNA is bound by residues arginine 292, arginine 311, and arginine 316.

The protein belongs to the RuvB family. As to quaternary structure, homohexamer. Forms an RuvA(8)-RuvB(12)-Holliday junction (HJ) complex. HJ DNA is sandwiched between 2 RuvA tetramers; dsDNA enters through RuvA and exits via RuvB. An RuvB hexamer assembles on each DNA strand where it exits the tetramer. Each RuvB hexamer is contacted by two RuvA subunits (via domain III) on 2 adjacent RuvB subunits; this complex drives branch migration. In the full resolvosome a probable DNA-RuvA(4)-RuvB(12)-RuvC(2) complex forms which resolves the HJ.

Its subcellular location is the cytoplasm. The catalysed reaction is ATP + H2O = ADP + phosphate + H(+). In terms of biological role, the RuvA-RuvB-RuvC complex processes Holliday junction (HJ) DNA during genetic recombination and DNA repair, while the RuvA-RuvB complex plays an important role in the rescue of blocked DNA replication forks via replication fork reversal (RFR). RuvA specifically binds to HJ cruciform DNA, conferring on it an open structure. The RuvB hexamer acts as an ATP-dependent pump, pulling dsDNA into and through the RuvAB complex. RuvB forms 2 homohexamers on either side of HJ DNA bound by 1 or 2 RuvA tetramers; 4 subunits per hexamer contact DNA at a time. Coordinated motions by a converter formed by DNA-disengaged RuvB subunits stimulates ATP hydrolysis and nucleotide exchange. Immobilization of the converter enables RuvB to convert the ATP-contained energy into a lever motion, pulling 2 nucleotides of DNA out of the RuvA tetramer per ATP hydrolyzed, thus driving DNA branch migration. The RuvB motors rotate together with the DNA substrate, which together with the progressing nucleotide cycle form the mechanistic basis for DNA recombination by continuous HJ branch migration. Branch migration allows RuvC to scan DNA until it finds its consensus sequence, where it cleaves and resolves cruciform DNA. This is Holliday junction branch migration complex subunit RuvB from Staphylococcus aureus (strain MRSA252).